The primary structure comprises 387 residues: Probable peptidoglycan glycosyltransferase FtsW (387 aa).

A run of 9 helical transmembrane segments spans residues 19–39 (LDFSLYATVAILISVGIVMVA), 61–81 (ITFLAMGLVGGLVILAVPMSV), 86–106 (SGLLLILAFFLLMAVLIPGIG), 118–138 (LGPFSMQASEIAKFCLIVYFA), 161–181 (VLLIIVLLLLLEPDFGSSVVI), 199–219 (FLLLAVSGVAGLALMAVASPY), 286–306 (FIGAIALIGVFGFFLYRLVIL), 320–340 (YVVFGIGVMLAMQAFINMGVA), and 352–372 (PFISYGGSSLLITCGLMALVF).

This sequence belongs to the SEDS family. FtsW subfamily.

The protein localises to the cell inner membrane. The enzyme catalyses [GlcNAc-(1-&gt;4)-Mur2Ac(oyl-L-Ala-gamma-D-Glu-L-Lys-D-Ala-D-Ala)](n)-di-trans,octa-cis-undecaprenyl diphosphate + beta-D-GlcNAc-(1-&gt;4)-Mur2Ac(oyl-L-Ala-gamma-D-Glu-L-Lys-D-Ala-D-Ala)-di-trans,octa-cis-undecaprenyl diphosphate = [GlcNAc-(1-&gt;4)-Mur2Ac(oyl-L-Ala-gamma-D-Glu-L-Lys-D-Ala-D-Ala)](n+1)-di-trans,octa-cis-undecaprenyl diphosphate + di-trans,octa-cis-undecaprenyl diphosphate + H(+). It participates in cell wall biogenesis; peptidoglycan biosynthesis. Functionally, peptidoglycan polymerase that is essential for cell division. This is Probable peptidoglycan glycosyltransferase FtsW from Saccharophagus degradans (strain 2-40 / ATCC 43961 / DSM 17024).